The primary structure comprises 413 residues: Putative competence-damage inducible protein (413 aa).

This sequence belongs to the CinA family.

The sequence is that of Putative competence-damage inducible protein from Acetivibrio thermocellus (strain ATCC 27405 / DSM 1237 / JCM 9322 / NBRC 103400 / NCIMB 10682 / NRRL B-4536 / VPI 7372) (Clostridium thermocellum).